Consider the following 180-residue polypeptide: NADH-quinone oxidoreductase subunit I (180 aa).

4Fe-4S ferredoxin-type domains follow at residues 50–80 (LTRDPDGEERCVACNLCAVACPVGCISLQKA) and 90–119 (EFFRINFSRCIFCGLCEEACPTTAIQLTPD). The [4Fe-4S] cluster site is built by C60, C63, C66, C70, C99, C102, C105, and C109.

Belongs to the complex I 23 kDa subunit family. In terms of assembly, NDH-1 is composed of 13 different subunits. Subunits NuoA, H, J, K, L, M, N constitute the membrane sector of the complex. [4Fe-4S] cluster is required as a cofactor.

The protein resides in the cell inner membrane. The catalysed reaction is a quinone + NADH + 5 H(+)(in) = a quinol + NAD(+) + 4 H(+)(out). Its function is as follows. NDH-1 shuttles electrons from NADH, via FMN and iron-sulfur (Fe-S) centers, to quinones in the respiratory chain. The immediate electron acceptor for the enzyme in this species is believed to be ubiquinone. Couples the redox reaction to proton translocation (for every two electrons transferred, four hydrogen ions are translocated across the cytoplasmic membrane), and thus conserves the redox energy in a proton gradient. The sequence is that of NADH-quinone oxidoreductase subunit I from Yersinia enterocolitica serotype O:8 / biotype 1B (strain NCTC 13174 / 8081).